The following is an 87-amino-acid chain: Small ribosomal subunit protein bS20 (87 aa).

This sequence belongs to the bacterial ribosomal protein bS20 family.

In terms of biological role, binds directly to 16S ribosomal RNA. The chain is Small ribosomal subunit protein bS20 from Shigella flexneri serotype 5b (strain 8401).